The chain runs to 265 residues: Chlorophyll a-b binding protein 1C, chloroplastic (265 aa).

The transit peptide at 1-34 directs the protein to the chloroplast; the sequence is MAAATMALSSPSFAGQAVKLSPSASEISGNGRIT. Residues 151 to 171 traverse the membrane as a helical segment; that stretch reads LVHAQSILAIWACQVVLMGAV. The chlorophyll b site is built by Val152, Ser156, Gln164, Glu172, Arg175, and Leu181. Chlorophyll a is bound by residues Lys212, Glu213, Asn216, Arg218, Gln230, His245, and Ala254. The chain crosses the membrane as a helical span at residues 219-239; that stretch reads LAMFSMFGFFVQAIVTGKGPL. Phe261 lines the chlorophyll b pocket.

This sequence belongs to the light-harvesting chlorophyll a/b-binding (LHC) protein family. The LHC complex consists of chlorophyll a-b binding proteins. Binds at least 14 chlorophylls (8 Chl-a and 6 Chl-b) and carotenoids such as lutein and neoxanthin. serves as cofactor. Photoregulated by reversible phosphorylation of its threonine residues.

Its subcellular location is the plastid. It is found in the chloroplast thylakoid membrane. Functionally, the light-harvesting complex (LHC) functions as a light receptor, it captures and delivers excitation energy to photosystems with which it is closely associated. This is Chlorophyll a-b binding protein 1C, chloroplastic (CAB1C) from Solanum lycopersicum (Tomato).